The sequence spans 291 residues: ATP synthase gamma chain (291 aa).

It belongs to the ATPase gamma chain family. In terms of assembly, F-type ATPases have 2 components, CF(1) - the catalytic core - and CF(0) - the membrane proton channel. CF(1) has five subunits: alpha(3), beta(3), gamma(1), delta(1), epsilon(1). CF(0) has three main subunits: a, b and c.

The protein resides in the cell inner membrane. In terms of biological role, produces ATP from ADP in the presence of a proton gradient across the membrane. The gamma chain is believed to be important in regulating ATPase activity and the flow of protons through the CF(0) complex. The protein is ATP synthase gamma chain of Verminephrobacter eiseniae (strain EF01-2).